The following is a 144-amino-acid chain: Globin (144 aa).

An N-acetylalanine modification is found at Ala1. Residues 1–144 (ALSAADAGLL…IISALQSAGK (144 aa)) enclose the Globin domain. His95 is a heme b binding site.

The protein belongs to the globin family. In terms of assembly, monomer.

This is Globin from Aplysia juliana (Walking sea hare).